The primary structure comprises 89 residues: Small ribosomal subunit protein uS15 (89 aa).

It belongs to the universal ribosomal protein uS15 family. In terms of assembly, part of the 30S ribosomal subunit. Forms a bridge to the 50S subunit in the 70S ribosome, contacting the 23S rRNA.

In terms of biological role, one of the primary rRNA binding proteins, it binds directly to 16S rRNA where it helps nucleate assembly of the platform of the 30S subunit by binding and bridging several RNA helices of the 16S rRNA. Its function is as follows. Forms an intersubunit bridge (bridge B4) with the 23S rRNA of the 50S subunit in the ribosome. In Bacillus licheniformis (strain ATCC 14580 / DSM 13 / JCM 2505 / CCUG 7422 / NBRC 12200 / NCIMB 9375 / NCTC 10341 / NRRL NRS-1264 / Gibson 46), this protein is Small ribosomal subunit protein uS15.